The following is a 78-amino-acid chain: Putative capsid protein ORF9 (78 aa).

Positions 1–29 (MIKLVLLVAAIAIFGTGFITVIINQFTSA) are cleaved as a signal peptide. A helical membrane pass occupies residues 52–72 (VLFSHPLMLTISSLYIVGFIV).

This sequence belongs to the plectrovirus ORF9 family. In terms of assembly, homomultimerizes.

It localises to the virion. It is found in the host membrane. May self assemble to form a helical capsid wrapping up the viral genomic DNA. The virion assembly and budding take place at the host inner membrane. This is Putative capsid protein ORF9 from Spiroplasma virus SpV1-C74 (SpV1).